The chain runs to 284 residues: Large ribosomal subunit protein uL2 (284 aa).

Disordered regions lie at residues glutamate 28–serine 50 and arginine 232–lysine 284. A compositionally biased stretch (basic residues) spans arginine 36 to phenylalanine 46. Residues aspartate 240 to histidine 250 show a composition bias toward basic and acidic residues. The span at lysine 264 to lysine 284 shows a compositional bias: basic residues.

It belongs to the universal ribosomal protein uL2 family. Part of the 50S ribosomal subunit. Forms a bridge to the 30S subunit in the 70S ribosome.

One of the primary rRNA binding proteins. Required for association of the 30S and 50S subunits to form the 70S ribosome, for tRNA binding and peptide bond formation. It has been suggested to have peptidyltransferase activity; this is somewhat controversial. Makes several contacts with the 16S rRNA in the 70S ribosome. In Chlamydia trachomatis serovar L2 (strain ATCC VR-902B / DSM 19102 / 434/Bu), this protein is Large ribosomal subunit protein uL2.